We begin with the raw amino-acid sequence, 430 residues long: Small ribosomal subunit protein uS3m (430 aa).

It belongs to the universal ribosomal protein uS3 family.

The protein localises to the mitochondrion. The protein is Small ribosomal subunit protein uS3m (RPS3) of Marchantia polymorpha (Common liverwort).